The chain runs to 223 residues: Urease accessory protein UreF (223 aa).

The protein belongs to the UreF family. In terms of assembly, ureD, UreF and UreG form a complex that acts as a GTP-hydrolysis-dependent molecular chaperone, activating the urease apoprotein by helping to assemble the nickel containing metallocenter of UreC. The UreE protein probably delivers the nickel.

It is found in the cytoplasm. Functionally, required for maturation of urease via the functional incorporation of the urease nickel metallocenter. This chain is Urease accessory protein UreF, found in Rhizobium meliloti (strain 1021) (Ensifer meliloti).